The sequence spans 322 residues: Serine protease 38 (322 aa).

Residues 1-28 (MAALTSGLGVLGYLLFPLLLASPTWVTS) form the signal peptide. Residues 29–55 (VSRRHPKSQANSLSGDVACGQPVLQGK) constitute a propeptide, activation peptide. One can recognise a Peptidase S1 domain in the interval 56-289 (LLGGEFARDR…FLSWIRYHLQ (234 aa)). The cysteines at positions 81 and 97 are disulfide-linked. Residues H96 and D146 each act as charge relay system in the active site. N176 is a glycosylation site (N-linked (GlcNAc...) asparagine). Cystine bridges form between C179–C247, C210–C226, and C237–C265. Residue S241 is the Charge relay system of the active site. N-linked (GlcNAc...) asparagine glycans are attached at residues N250 and N276.

Belongs to the peptidase S1 family.

It localises to the secreted. The polypeptide is Serine protease 38 (Prss38) (Mus musculus (Mouse)).